A 362-amino-acid chain; its full sequence is Ferrochelatase (362 aa).

Residues His-228 and Glu-309 each coordinate Fe cation.

The protein belongs to the ferrochelatase family.

It is found in the cytoplasm. It catalyses the reaction heme b + 2 H(+) = protoporphyrin IX + Fe(2+). The protein operates within porphyrin-containing compound metabolism; protoheme biosynthesis; protoheme from protoporphyrin-IX: step 1/1. Its function is as follows. Catalyzes the ferrous insertion into protoporphyrin IX. The chain is Ferrochelatase from Bordetella pertussis (strain Tohama I / ATCC BAA-589 / NCTC 13251).